A 247-amino-acid polypeptide reads, in one-letter code: ATP synthase subunit a, chloroplastic (247 aa).

A run of 5 helical transmembrane segments spans residues 38-58 (QVLITSWVVIAILLGSATLAV), 95-115 (VPFIGTMFLFIFVSNWSGALL), 134-154 (INTTVALALLTSVAYFYAGIS), 199-219 (LVVVVLVSLVPLVVPIPVMFL), and 220-240 (GLFTSGIQALIFATLAAAYIG).

It belongs to the ATPase A chain family. In terms of assembly, F-type ATPases have 2 components, CF(1) - the catalytic core - and CF(0) - the membrane proton channel. CF(1) has five subunits: alpha(3), beta(3), gamma(1), delta(1), epsilon(1). CF(0) has four main subunits: a, b, b' and c.

The protein resides in the plastid. Its subcellular location is the chloroplast thylakoid membrane. Functionally, key component of the proton channel; it plays a direct role in the translocation of protons across the membrane. This is ATP synthase subunit a, chloroplastic from Daucus carota (Wild carrot).